Here is a 329-residue protein sequence, read N- to C-terminus: CDP-diacylglycerol--glycerol-3-phosphate 3-phosphatidyltransferase 1, chloroplastic (329 aa).

The N-terminal 38 residues, Met1 to Ala38, are a transit peptide targeting the chloroplast. 4 helical membrane passes run Pro150–Leu170, Val190–Ala210, Leu217–Val237, and Ile300–Ile320.

The protein belongs to the CDP-alcohol phosphatidyltransferase class-I family. It depends on Mn(2+) as a cofactor.

The protein resides in the plastid. Its subcellular location is the chloroplast membrane. It carries out the reaction a CDP-1,2-diacyl-sn-glycerol + sn-glycerol 3-phosphate = a 1,2-diacyl-sn-glycero-3-phospho-(1'-sn-glycero-3'-phosphate) + CMP + H(+). Its pathway is phospholipid metabolism; phosphatidylglycerol biosynthesis; phosphatidylglycerol from CDP-diacylglycerol: step 1/2. Functionally, catalyzes the committed step to the synthesis of the acidic phospholipids. Transfers specifically a phosphatidyl group from CDP-diacylglycerol to glycerol-3-phosphate to form phosphatidylglycerophosphate. This chain is CDP-diacylglycerol--glycerol-3-phosphate 3-phosphatidyltransferase 1, chloroplastic, found in Oryza sativa subsp. japonica (Rice).